The chain runs to 566 residues: Probable F-box protein At5g39490 (566 aa).

Residues 8 to 54 enclose the F-box domain; it reads ACLLLMLPEDIFVVISRFLSPSDICNLILCGKSLRALVDSEKTWLVQ. Positions 318 to 338 are disordered; sequence LRKSSSSKNTTPSQSEIRHSN. Residues 320-332 are compositionally biased toward low complexity; sequence KSSSSKNTTPSQS.

This is Probable F-box protein At5g39490 from Arabidopsis thaliana (Mouse-ear cress).